Reading from the N-terminus, the 104-residue chain is Large ribosomal subunit protein uL24 (104 aa).

This sequence belongs to the universal ribosomal protein uL24 family. Part of the 50S ribosomal subunit.

Functionally, one of two assembly initiator proteins, it binds directly to the 5'-end of the 23S rRNA, where it nucleates assembly of the 50S subunit. In terms of biological role, one of the proteins that surrounds the polypeptide exit tunnel on the outside of the subunit. This Chelativorans sp. (strain BNC1) protein is Large ribosomal subunit protein uL24.